We begin with the raw amino-acid sequence, 287 residues long: Aquaporin PIP2-1 (287 aa).

Position 1 is an N-acetylmethionine (methionine 1). Topologically, residues 2-39 (AKDVEAVPGEGFQTRDYQDPPPAPFIDGAELKKWSFYR) are cytoplasmic. Lysine 3 bears the N6,N6-dimethyllysine; partial mark. The helical transmembrane segment at 40–60 (AVIAEFVATLLFLYITVLTVI) threads the bilayer. Topologically, residues 61 to 83 (GYKIQSDTDAGGVDCGGVGILGI) are extracellular. Residues 84 to 104 (AWAFGGMIFILVYCTAGISGG) traverse the membrane as a helical segment. The Cytoplasmic portion of the chain corresponds to 105-125 (HINPAVTFGLFLARKVSLPRA). The short motif at 107–109 (NPA) is the NPA 1 element. A helical transmembrane segment spans residues 126-146 (LLYIIAQCLGAICGVGFVKAF). At 147–167 (QSSYYTRYGGGANSLADGYST) the chain is on the extracellular side. A helical membrane pass occupies residues 168 to 188 (GTGLAAEIIGTFVLVYTVFSA). Residues 189-201 (TDPKRSARDSHVP) lie on the Cytoplasmic side of the membrane. Residues 202-222 (VLAPLPIGFAVFMVHLATIPI) form a helical membrane-spanning segment. The Extracellular segment spans residues 223–249 (TGTGINPARSFGAAVIYNKSKPWDDHW). Positions 228–230 (NPA) match the NPA 2 motif. A helical membrane pass occupies residues 250-270 (IFWVGPFIGAAIAAFYHQFVL). The Cytoplasmic segment spans residues 271–287 (RASGSKSLGSFRSAANV). Serine 280 and serine 283 each carry phosphoserine.

The protein belongs to the MIP/aquaporin (TC 1.A.8) family. PIP (TC 1.A.8.11) subfamily. Ubiquitinated by RMA1, leading to proteasomal degradation. Post-translationally, the phosphorylation at Ser-280 and Ser-283 is altered by salt (NaCl) and hydrogen peroxide H(2)O(2) treatments. Phosphorylation of Ser-283 is required for plasma membrane targeting. Predominantly expressed in roots and green siliques. Also expressed at lower level above ground and in flower buds.

The protein resides in the cell membrane. Water channel required to facilitate the transport of water across cell membrane. Probably involved in root water uptake. Its function is impaired by Hg(2+). The polypeptide is Aquaporin PIP2-1 (PIP2-1) (Arabidopsis thaliana (Mouse-ear cress)).